Here is a 237-residue protein sequence, read N- to C-terminus: MGMGMEKGMTAYEAARERTVEENKRKMEALNLRHLSAAIAVAPKTPSPMKQKRRRIIEAAVVAPSPPRRSRRLANLPEVKYAEVAPDGAERMKRSPRKAIDSIYLATRGSISMEARLEAARKAEELESQLDPEFPSFVKPMLHSHVVRGFWLGLPRHFCETYLPKHDAIVTLLDEKDEQFDTNYLAYKNGLSGGWAGFALDHGLLDGDATVFQLVKPTTFKVHIIRATVDDGNEVTK.

The TF-B3 DNA-binding region spans 137–228 (FVKPMLHSHV…TFKVHIIRAT (92 aa)).

It localises to the nucleus. The protein is B3 domain-containing protein Os03g0184500 of Oryza sativa subsp. japonica (Rice).